A 1074-amino-acid chain; its full sequence is Transmembrane protein 132E (1074 aa).

Positions 1-25 (MAPGMSGRGGAALLCLSALLAHASG) are cleaved as a signal peptide. Topologically, residues 26–893 (RSHPASPSPP…LTDLEIGMYA (868 aa)) are extracellular. 2 N-linked (GlcNAc...) asparagine glycosylation sites follow: Asn-70 and Asn-91. Disordered regions lie at residues 202 to 226 (PPAPAAPPTARRKSPDGLEPEATGE) and 241 to 264 (ASGGCGGSRRGAGPGVGARAESPT). Gly residues predominate over residues 243–256 (GGCGGSRRGAGPGV). 2 N-linked (GlcNAc...) asparagine glycosylation sites follow: Asn-318 and Asn-399. 2 disordered regions span residues 563 to 585 (RSVRESEDEDEEEEERRQSASRG) and 814 to 867 (GRDE…VPPT). Over residues 841-862 (GAGPPGSALPAPEAPGPGTASP) the composition is skewed to low complexity. A helical membrane pass occupies residues 894–914 (LLGVFCLAILVFLINCIVFVL). The Cytoplasmic portion of the chain corresponds to 915–1074 (RYRHKRIPPE…NYMRRIKEIA (160 aa)). Residues 946–1063 (VQGELSPPAG…PTRPTAPPDL (118 aa)) form a disordered region. The span at 972 to 984 (SGSSQTSVQSQVH) shows a compositional bias: low complexity. Residues 1034 to 1044 (GEEDEEEEEDL) show a composition bias toward acidic residues.

This sequence belongs to the TMEM132 family.

It is found in the membrane. In terms of biological role, required for normal inner ear hair cell function and hearing. The polypeptide is Transmembrane protein 132E (Homo sapiens (Human)).